The sequence spans 319 residues: Small ribosomal subunit protein mS35 (319 aa).

A mitochondrion-targeting transit peptide spans 1 to 30 (MKVPLGLWKVSRGNLWSTQKRVLTMSRCLN).

Belongs to the mitochondrion-specific ribosomal protein mS35 family. As to quaternary structure, component of the mitochondrial small ribosomal subunit (mt-SSU). Mature yeast 74S mitochondrial ribosomes consist of a small (37S) and a large (54S) subunit. The 37S small subunit contains a 15S ribosomal RNA (15S mt-rRNA) and 34 different proteins. The 54S large subunit contains a 21S rRNA (21S mt-rRNA) and 46 different proteins.

It localises to the mitochondrion. Component of the mitochondrial ribosome (mitoribosome), a dedicated translation machinery responsible for the synthesis of mitochondrial genome-encoded proteins, including at least some of the essential transmembrane subunits of the mitochondrial respiratory chain. The mitoribosomes are attached to the mitochondrial inner membrane and translation products are cotranslationally integrated into the membrane. The protein is Small ribosomal subunit protein mS35 (RSM24) of Saccharomyces cerevisiae (strain ATCC 204508 / S288c) (Baker's yeast).